The chain runs to 119 residues: Large ribosomal subunit protein bL20 (119 aa).

It belongs to the bacterial ribosomal protein bL20 family.

Its function is as follows. Binds directly to 23S ribosomal RNA and is necessary for the in vitro assembly process of the 50S ribosomal subunit. It is not involved in the protein synthesizing functions of that subunit. The polypeptide is Large ribosomal subunit protein bL20 (Aromatoleum aromaticum (strain DSM 19018 / LMG 30748 / EbN1) (Azoarcus sp. (strain EbN1))).